Consider the following 263-residue polypeptide: Undecaprenyl-diphosphatase (263 aa).

8 helical membrane passes run 1–21 (MSYLHAIILGIVEGITEFLPI), 41–61 (FTKAFEVIIQFGAIMSVLVLY), 69–89 (WGFYRKLFVAFLPTAIIGFVV), 96–116 (LMGSVQVVAWSLIIGGVILIW), 147–167 (AIAMIPGVSRSGATIMGGLTL), 177–197 (FSFFLAVPTMAAATLYKLLKI), 208–228 (LLLVGCAVAFVVAMIAIKFFI), and 238–258 (GFGYYRIVLGLVILILLYTGH).

This sequence belongs to the UppP family.

Its subcellular location is the cell inner membrane. It carries out the reaction di-trans,octa-cis-undecaprenyl diphosphate + H2O = di-trans,octa-cis-undecaprenyl phosphate + phosphate + H(+). Its function is as follows. Catalyzes the dephosphorylation of undecaprenyl diphosphate (UPP). Confers resistance to bacitracin. This chain is Undecaprenyl-diphosphatase, found in Bdellovibrio bacteriovorus (strain ATCC 15356 / DSM 50701 / NCIMB 9529 / HD100).